Reading from the N-terminus, the 436-residue chain is 3-ketoacyl-CoA thiolase (436 aa).

Residue Cys-99 is the Acyl-thioester intermediate of the active site. Active-site proton acceptor residues include His-392 and Cys-422.

The protein belongs to the thiolase-like superfamily. Thiolase family. As to quaternary structure, heterotetramer of two alpha chains (FadJ) and two beta chains (FadI).

It is found in the cytoplasm. The catalysed reaction is an acyl-CoA + acetyl-CoA = a 3-oxoacyl-CoA + CoA. It participates in lipid metabolism; fatty acid beta-oxidation. Catalyzes the final step of fatty acid oxidation in which acetyl-CoA is released and the CoA ester of a fatty acid two carbons shorter is formed. The chain is 3-ketoacyl-CoA thiolase from Alteromonas mediterranea (strain DSM 17117 / CIP 110805 / LMG 28347 / Deep ecotype).